An 819-amino-acid polypeptide reads, in one-letter code: Ent-beyerene synthase KSL2, chloroplastic (819 aa).

Residues 1-58 (MLPCLFPAYGSVVACKPSAIDRSPFGLLSQPKQTNRTLIRRPKVTKAFMAIEAMRHCS) constitute a chloroplast transit peptide. Positions 58–76 (SSSSSSEEGGAAATTAARS) are enriched in low complexity. Residues 58–77 (SSSSSSEEGGAAATTAARSA) are disordered. Aspartate 567, aspartate 571, asparagine 711, serine 715, and glutamate 719 together coordinate Mg(2+). The DDXXD motif motif lies at 567–571 (DDFFD).

The protein belongs to the terpene synthase family. Mg(2+) is required as a cofactor. Expressed in roots. Highly expressed in stems, flowers and panicle.

The protein resides in the plastid. The protein localises to the chloroplast. The enzyme catalyses ent-copalyl diphosphate = ent-beyerene + diphosphate. The catalysed reaction is ent-copalyl diphosphate = ent-kaur-16-ene + diphosphate. The protein operates within secondary metabolite biosynthesis; terpenoid biosynthesis. Its function is as follows. Diterpene cyclase involved in jasmonic acid-dependent defense mechanisms in roots by mediating the biosynthesis of labdane-related diterpenoids (LRDs) natural products such as ent-beyerene, an antimicrobial compound. Catalyzes the cyclization of ent-CDP into ent-beyerene as a major and ent-kaurene as a minor product. May be involved in the catalysis of an early step of the gibberellin (GA) biosynthesis pathway. The chain is Ent-beyerene synthase KSL2, chloroplastic from Oryza sativa subsp. japonica (Rice).